Reading from the N-terminus, the 482-residue chain is Ras GTPase-activating protein-binding protein 2 (482 aa).

The NTF2 domain occupies 11-133 (VGREFVRQYY…FYVHNDMFRY (123 aa)). A compositionally biased stretch (acidic residues) spans 140-158 (DSEPELDEESEDEVEEEQE). Disordered stretches follow at residues 140–171 (DSEPELDEESEDEVEEEQEERQPSPEPVQENA) and 187–318 (EPLE…EQND). A phosphoserine mark is found at serine 141, serine 149, and serine 225. The segment at 142–220 (EPELDEESED…PQVEEKNLEE (79 aa)) is acidic disordered region. Basic and acidic residues predominate over residues 191 to 225 (ESSHEPEPEPESETKTEELKPQVEEKNLEELEEKS). Threonine 227 is subject to Phosphothreonine. Residue serine 235 is modified to Phosphoserine. Polar residues predominate over residues 247–264 (ASVTSKNLPPSGTVSSSG). Residue lysine 281 forms a Glycyl lysine isopeptide (Lys-Gly) (interchain with G-Cter in SUMO2) linkage. Residues 290-300 (RVREQRPRERP) show a composition bias toward basic and acidic residues. Residues 331-409 (HQLFVGNLPH…VRLNVEEKKT (79 aa)) form the RRM domain. Position 392 is an N6-succinyllysine (lysine 392). The RG-rich region stretch occupies residues 404–476 (VEEKKTRAAR…GRGTGQMEGR (73 aa)). Residues 408-432 (KTRAARERETRGGGDDRRDIRRNDR) show a composition bias toward basic and acidic residues. Positions 408–482 (KTRAARERET…MEGRFTGQRR (75 aa)) are disordered. Residues 433–445 (GPGGPRGIVGGGM) show a composition bias toward gly residues. Arginine 457 carries the post-translational modification Omega-N-methylarginine. A Phosphoserine modification is found at serine 466. Arginine 468 is modified (omega-N-methylarginine).

Forms homooligomers. Forms heterodimers with G3BP1. Interacts with NFKBIA (via N-terminus). Interacts (via NTF2 domain) with USP10; inhibiting stress granule formation. Interacts (via NTF2 domain) with CAPRIN1; promoting stress granule formation. Associates (via RG-rich region) with 40S ribosome subunits. Interacts with PABPC1. As to quaternary structure, (Microbial infection) Interacts with non-structural protein 3 (via C-terminus) of Sindbis virus and Semliki forest virus; this interaction inhibits the formation of host stress granules on viral mRNAs and the nsp3-G3BP2 complexes bind viral RNAs and probably orchestrate the assembly of viral replication complexes. Post-translationally, (Microbial infection) Cleaved by foot-and-mouth disease virus leader protease; this cleavage suppresses the formation of cytoplasmic stress granules.

The protein localises to the cytoplasm. The protein resides in the stress granule. With respect to regulation, under physiological conditions, G3BP2 adopts a compact state that is stabilized by intramolecular interactions between the RG-rich and the acidic regions that inhibit phase separation. Upon stress, polysomes disassemble and mRNAs are released in an unfolded protein-free state. Binding of unfolded mRNA to G3BP2 outcompetes the intramolecular interactions and RNA-bound G3BP2 adopts an expanded conformation in which the RG-rich region becomes exposed to engage in protein-protein and protein-RNA interactions, allowing physical cross-linking of RNA molecules to form protein-RNA condensates, leading to liquid-liquid phase separation (LLPS). In terms of biological role, scaffold protein that plays an essential role in cytoplasmic stress granule formation which acts as a platform for antiviral signaling. Plays an essential role in stress granule formation. Stress granules are membraneless compartments that store mRNAs and proteins, such as stalled translation pre-initiation complexes, in response to stress. Promotes formation of stress granules phase-separated membraneless compartment by undergoing liquid-liquid phase separation (LLPS) upon unfolded RNA-binding: functions as a molecular switch that triggers RNA-dependent LLPS in response to a rise in intracellular free RNA concentrations. The chain is Ras GTPase-activating protein-binding protein 2 from Homo sapiens (Human).